Consider the following 89-residue polypeptide: Small ribosomal subunit protein uS15 (89 aa).

This sequence belongs to the universal ribosomal protein uS15 family. As to quaternary structure, part of the 30S ribosomal subunit. Forms a bridge to the 50S subunit in the 70S ribosome, contacting the 23S rRNA.

One of the primary rRNA binding proteins, it binds directly to 16S rRNA where it helps nucleate assembly of the platform of the 30S subunit by binding and bridging several RNA helices of the 16S rRNA. Functionally, forms an intersubunit bridge (bridge B4) with the 23S rRNA of the 50S subunit in the ribosome. The protein is Small ribosomal subunit protein uS15 of Corynebacterium kroppenstedtii (strain DSM 44385 / JCM 11950 / CIP 105744 / CCUG 35717).